The sequence spans 102 residues: Small ribosomal subunit protein uS10 (102 aa).

The protein belongs to the universal ribosomal protein uS10 family. In terms of assembly, part of the 30S ribosomal subunit.

Its function is as follows. Involved in the binding of tRNA to the ribosomes. The chain is Small ribosomal subunit protein uS10 from Methanoregula boonei (strain DSM 21154 / JCM 14090 / 6A8).